A 189-amino-acid polypeptide reads, in one-letter code: Glycerol-3-phosphate acyltransferase 1 (189 aa).

A run of 5 helical transmembrane segments spans residues 12-32, 61-81, 88-108, 124-144, and 164-184; these read MQFLYLVASYLFGNILTAYIV, GYFVATFLGDAIKGAIVVSIA, FTFVMLTLLAVIMGHIYPMLF, IAFDYLIALTLVAVFIIFYLI, and ILYSYSIVTTILSALIIVLIL.

The protein belongs to the PlsY family. Probably interacts with PlsX.

The protein resides in the cell membrane. The enzyme catalyses an acyl phosphate + sn-glycerol 3-phosphate = a 1-acyl-sn-glycero-3-phosphate + phosphate. It functions in the pathway lipid metabolism; phospholipid metabolism. Its function is as follows. Catalyzes the transfer of an acyl group from acyl-phosphate (acyl-PO(4)) to glycerol-3-phosphate (G3P) to form lysophosphatidic acid (LPA). This enzyme utilizes acyl-phosphate as fatty acyl donor, but not acyl-CoA or acyl-ACP. This is Glycerol-3-phosphate acyltransferase 1 from Bacillus anthracis.